Reading from the N-terminus, the 697-residue chain is Glycine--tRNA ligase beta subunit (697 aa).

The protein belongs to the class-II aminoacyl-tRNA synthetase family. Tetramer of two alpha and two beta subunits.

The protein resides in the cytoplasm. The catalysed reaction is tRNA(Gly) + glycine + ATP = glycyl-tRNA(Gly) + AMP + diphosphate. The sequence is that of Glycine--tRNA ligase beta subunit from Ralstonia nicotianae (strain ATCC BAA-1114 / GMI1000) (Ralstonia solanacearum).